Reading from the N-terminus, the 701-residue chain is Elongation factor G (701 aa).

In terms of domain architecture, tr-type G spans 8–290 (ERYRNIGISA…AVVDYLPAPT (283 aa)). Residues 17-24 (AHIDAGKT), 88-92 (DTPGH), and 142-145 (NKMD) each bind GTP.

Belongs to the TRAFAC class translation factor GTPase superfamily. Classic translation factor GTPase family. EF-G/EF-2 subfamily.

It is found in the cytoplasm. Catalyzes the GTP-dependent ribosomal translocation step during translation elongation. During this step, the ribosome changes from the pre-translocational (PRE) to the post-translocational (POST) state as the newly formed A-site-bound peptidyl-tRNA and P-site-bound deacylated tRNA move to the P and E sites, respectively. Catalyzes the coordinated movement of the two tRNA molecules, the mRNA and conformational changes in the ribosome. The chain is Elongation factor G from Aeromonas salmonicida (strain A449).